A 75-amino-acid polypeptide reads, in one-letter code: Small ribosomal subunit protein bS18c (75 aa).

The protein belongs to the bacterial ribosomal protein bS18 family. In terms of assembly, part of the 30S ribosomal subunit.

The protein resides in the plastid. It localises to the chloroplast. This Anthoceros angustus (Hornwort) protein is Small ribosomal subunit protein bS18c (rps18).